A 405-amino-acid chain; its full sequence is Acetylornithine/succinyldiaminopimelate aminotransferase (405 aa).

Pyridoxal 5'-phosphate contacts are provided by residues 107–108 (GA) and Phe140. A N(2)-acetyl-L-ornithine-binding site is contributed by Arg143. 225–228 (DEVQ) is a pyridoxal 5'-phosphate binding site. Lys254 bears the N6-(pyridoxal phosphate)lysine mark. Thr282 serves as a coordination point for N(2)-acetyl-L-ornithine. Thr283 provides a ligand contact to pyridoxal 5'-phosphate.

The protein belongs to the class-III pyridoxal-phosphate-dependent aminotransferase family. ArgD subfamily. As to quaternary structure, homodimer. The cofactor is pyridoxal 5'-phosphate.

It is found in the cytoplasm. It carries out the reaction N(2)-acetyl-L-ornithine + 2-oxoglutarate = N-acetyl-L-glutamate 5-semialdehyde + L-glutamate. It catalyses the reaction N-succinyl-(2S,6S)-2,6-diaminopimelate + 2-oxoglutarate = (S)-2-succinylamino-6-oxoheptanedioate + L-glutamate. Its pathway is amino-acid biosynthesis; L-arginine biosynthesis; N(2)-acetyl-L-ornithine from L-glutamate: step 4/4. It functions in the pathway amino-acid biosynthesis; L-lysine biosynthesis via DAP pathway; LL-2,6-diaminopimelate from (S)-tetrahydrodipicolinate (succinylase route): step 2/3. Involved in both the arginine and lysine biosynthetic pathways. The chain is Acetylornithine/succinyldiaminopimelate aminotransferase from Yersinia pestis.